Here is a 559-residue protein sequence, read N- to C-terminus: Sporulation protein kinase mde3 (559 aa).

In terms of domain architecture, Protein kinase spans Tyr21–Phe323. Residues Leu27–Val35 and Lys53 each bind ATP. Asp150 functions as the Proton acceptor in the catalytic mechanism.

This sequence belongs to the protein kinase superfamily. Ser/Thr protein kinase family.

It carries out the reaction L-seryl-[protein] + ATP = O-phospho-L-seryl-[protein] + ADP + H(+). The enzyme catalyses L-threonyl-[protein] + ATP = O-phospho-L-threonyl-[protein] + ADP + H(+). Protein kinase which is essential for spore formation. The polypeptide is Sporulation protein kinase mde3 (mde3) (Schizosaccharomyces pombe (strain 972 / ATCC 24843) (Fission yeast)).